Consider the following 160-residue polypeptide: SsrA-binding protein (160 aa).

Belongs to the SmpB family.

It is found in the cytoplasm. In terms of biological role, required for rescue of stalled ribosomes mediated by trans-translation. Binds to transfer-messenger RNA (tmRNA), required for stable association of tmRNA with ribosomes. tmRNA and SmpB together mimic tRNA shape, replacing the anticodon stem-loop with SmpB. tmRNA is encoded by the ssrA gene; the 2 termini fold to resemble tRNA(Ala) and it encodes a 'tag peptide', a short internal open reading frame. During trans-translation Ala-aminoacylated tmRNA acts like a tRNA, entering the A-site of stalled ribosomes, displacing the stalled mRNA. The ribosome then switches to translate the ORF on the tmRNA; the nascent peptide is terminated with the 'tag peptide' encoded by the tmRNA and targeted for degradation. The ribosome is freed to recommence translation, which seems to be the essential function of trans-translation. The chain is SsrA-binding protein from Salmonella arizonae (strain ATCC BAA-731 / CDC346-86 / RSK2980).